The following is a 31-amino-acid chain: Sarcolipin (31 aa).

The Cytoplasmic portion of the chain corresponds to 1-7; that stretch reads MERSTRE. The helical transmembrane segment at 8-26 threads the bilayer; that stretch reads LCLNFTVVLITVILIWLLV. Residues 27–31 are Lumenal-facing; the sequence is RSYQY.

Belongs to the sarcolipin family. In terms of assembly, homooligomer. Can also form heterooligomers with other sarcoplasmic/endoplasmic reticulum calcium ATPase (SERCA) regulators ARLN, ERLN, PLN and STRIT1/DWORF. Monomer. Interacts with calcium ATPase ATP2A1/SERCA1. Interacts as a monomer with ATP2A2/SERCA2; the interaction decreases ATP2A2 Ca(2+) affinity. Interacts with VMP1; VMP1 competes with PLN and SLN to prevent them from forming an inhibitory complex with ATP2A2. In terms of tissue distribution, skeletal muscle (at protein level).

The protein localises to the sarcoplasmic reticulum membrane. Its subcellular location is the endoplasmic reticulum membrane. Functionally, reversibly inhibits the activity of ATP2A1/SERCA1 and ATP2A2/SERCA2 in sarcoplasmic reticulum by decreasing the apparent affinity of the ATPase for Ca(2+). Also inhibits the activity of ATP2A3/SERCA3. Modulates calcium re-uptake during muscle relaxation and plays an important role in calcium homeostasis in muscle. Required for muscle-based, non-shivering thermogenesis. The chain is Sarcolipin (SLN) from Oryctolagus cuniculus (Rabbit).